Consider the following 307-residue polypeptide: Aspartate carbamoyltransferase catalytic subunit (307 aa).

The carbamoyl phosphate site is built by Arg51 and Thr52. L-aspartate is bound at residue Lys80. The carbamoyl phosphate site is built by Arg101, His129, and Gln132. The L-aspartate site is built by Arg162 and Arg225. Carbamoyl phosphate-binding residues include Leu264 and Pro265.

It belongs to the aspartate/ornithine carbamoyltransferase superfamily. ATCase family. In terms of assembly, heterododecamer (2C3:3R2) of six catalytic PyrB chains organized as two trimers (C3), and six regulatory PyrI chains organized as three dimers (R2).

It catalyses the reaction carbamoyl phosphate + L-aspartate = N-carbamoyl-L-aspartate + phosphate + H(+). It participates in pyrimidine metabolism; UMP biosynthesis via de novo pathway; (S)-dihydroorotate from bicarbonate: step 2/3. Its function is as follows. Catalyzes the condensation of carbamoyl phosphate and aspartate to form carbamoyl aspartate and inorganic phosphate, the committed step in the de novo pyrimidine nucleotide biosynthesis pathway. The sequence is that of Aspartate carbamoyltransferase catalytic subunit from Lachnoclostridium phytofermentans (strain ATCC 700394 / DSM 18823 / ISDg) (Clostridium phytofermentans).